The primary structure comprises 392 residues: uncharacterized protein (392 aa).

Belongs to the mimivirus L17x/L18x family.

This is an uncharacterized protein from Acanthamoeba polyphaga (Amoeba).